Here is a 187-residue protein sequence, read N- to C-terminus: Large ribosomal subunit protein bL9 (187 aa).

The interval 168–187 (EEAPAEEDVAAEETSEAAEA) is disordered.

This sequence belongs to the bacterial ribosomal protein bL9 family.

Functionally, binds to the 23S rRNA. The polypeptide is Large ribosomal subunit protein bL9 (Paramagnetospirillum magneticum (strain ATCC 700264 / AMB-1) (Magnetospirillum magneticum)).